The sequence spans 389 residues: Chaperone protein DnaJ (389 aa).

Residues 6-70 (DYYEVLGLAK…QKKAAYDQYG (65 aa)) enclose the J domain. The CR-type zinc-finger motif lies at 142-224 (GVEKEIKYNR…CHGTGHEKKA (83 aa)). Zn(2+) contacts are provided by cysteine 155, cysteine 158, cysteine 172, cysteine 175, cysteine 198, cysteine 201, cysteine 212, and cysteine 215. CXXCXGXG motif repeat units follow at residues 155–162 (CATCGGNG), 172–179 (CHKCHGSG), 198–205 (CDVCHGTG), and 212–219 (CPTCHGTG).

This sequence belongs to the DnaJ family. In terms of assembly, homodimer. Zn(2+) serves as cofactor.

The protein localises to the cytoplasm. Functionally, participates actively in the response to hyperosmotic and heat shock by preventing the aggregation of stress-denatured proteins and by disaggregating proteins, also in an autonomous, DnaK-independent fashion. Unfolded proteins bind initially to DnaJ; upon interaction with the DnaJ-bound protein, DnaK hydrolyzes its bound ATP, resulting in the formation of a stable complex. GrpE releases ADP from DnaK; ATP binding to DnaK triggers the release of the substrate protein, thus completing the reaction cycle. Several rounds of ATP-dependent interactions between DnaJ, DnaK and GrpE are required for fully efficient folding. Also involved, together with DnaK and GrpE, in the DNA replication of plasmids through activation of initiation proteins. The protein is Chaperone protein DnaJ of Enterococcus faecalis (strain ATCC 700802 / V583).